The sequence spans 278 residues: HTH-type transcriptional activator RhaS (278 aa).

The HTH araC/xylS-type domain occupies 174-272 (NLLLAWLEDH…NWSPRDIRQG (99 aa)). DNA-binding regions (H-T-H motif) lie at residues 191 to 212 (DAVA…KQQT) and 239 to 262 (VTDI…RREF).

In terms of assembly, binds DNA as a dimer.

The protein localises to the cytoplasm. In terms of biological role, activates expression of the rhaBAD and rhaT operons. The chain is HTH-type transcriptional activator RhaS from Escherichia coli (strain SE11).